We begin with the raw amino-acid sequence, 511 residues long: GMP synthase [glutamine-hydrolyzing] (511 aa).

The 191-residue stretch at Leu-5–Asp-195 folds into the Glutamine amidotransferase type-1 domain. Cys-82 functions as the Nucleophile in the catalytic mechanism. Residues His-169 and Glu-171 contribute to the active site. A GMPS ATP-PPase domain is found at Trp-196–Arg-386. Residue Ser-223 to Ser-229 coordinates ATP.

In terms of assembly, homodimer.

It carries out the reaction XMP + L-glutamine + ATP + H2O = GMP + L-glutamate + AMP + diphosphate + 2 H(+). It participates in purine metabolism; GMP biosynthesis; GMP from XMP (L-Gln route): step 1/1. In terms of biological role, catalyzes the synthesis of GMP from XMP. This is GMP synthase [glutamine-hydrolyzing] from Acetivibrio thermocellus (strain ATCC 27405 / DSM 1237 / JCM 9322 / NBRC 103400 / NCIMB 10682 / NRRL B-4536 / VPI 7372) (Clostridium thermocellum).